The chain runs to 179 residues: Zinc finger HIT domain-containing protein 3 (179 aa).

Residues cysteine 11, cysteine 14, cysteine 22, cysteine 25, cysteine 30, cysteine 34, histidine 38, and cysteine 49 each contribute to the Zn(2+) site. An HIT-type zinc finger spans residues 11-49; that stretch reads CVVCLEKPKYRCPACRVPYCSLPCFRKHKAPPLQQLPVC. The residue at position 104 (serine 104) is a Phosphoserine.

Thyroid receptor interacting proteins (TRIPs) specifically interact with the ligand binding domain of the thyroid receptor (TR). Requires the presence of thyroid hormone for its interaction. Interacts with NUFIP1. Interacts (via HIT-type zinc finger) with the RUVBL1/RUVBL2 complex in the presence of ADP.

The protein resides in the cytoplasm. It is found in the nucleus. This Bos taurus (Bovine) protein is Zinc finger HIT domain-containing protein 3 (ZNHIT3).